The sequence spans 350 residues: UDP-N-acetylenolpyruvoylglucosamine reductase (350 aa).

Residues 24 to 195 form the FAD-binding PCMH-type domain; the sequence is HVDATARWLL…VAVEFNLPLL (172 aa). The active site involves Arg-172. The active-site Proton donor is Ser-245. Glu-342 is an active-site residue.

Belongs to the MurB family. Requires FAD as cofactor.

The protein localises to the cytoplasm. The enzyme catalyses UDP-N-acetyl-alpha-D-muramate + NADP(+) = UDP-N-acetyl-3-O-(1-carboxyvinyl)-alpha-D-glucosamine + NADPH + H(+). The protein operates within cell wall biogenesis; peptidoglycan biosynthesis. Functionally, cell wall formation. This is UDP-N-acetylenolpyruvoylglucosamine reductase from Xanthomonas campestris pv. campestris (strain B100).